The sequence spans 264 residues: tRNA (guanine-N(1)-)-methyltransferase (264 aa).

S-adenosyl-L-methionine-binding positions include Gly120 and 140–145; that span reads IGDYVL.

It belongs to the RNA methyltransferase TrmD family. In terms of assembly, homodimer.

Its subcellular location is the cytoplasm. The enzyme catalyses guanosine(37) in tRNA + S-adenosyl-L-methionine = N(1)-methylguanosine(37) in tRNA + S-adenosyl-L-homocysteine + H(+). In terms of biological role, specifically methylates guanosine-37 in various tRNAs. This chain is tRNA (guanine-N(1)-)-methyltransferase, found in Halorhodospira halophila (strain DSM 244 / SL1) (Ectothiorhodospira halophila (strain DSM 244 / SL1)).